Reading from the N-terminus, the 677-residue chain is DNA ligase (677 aa).

NAD(+)-binding positions include 34-38, 83-84, and Glu-117; these read DAEYD and SL. Lys-119 functions as the N6-AMP-lysine intermediate in the catalytic mechanism. NAD(+) is bound by residues Arg-140, Glu-175, Lys-283, and Lys-307. Positions 401, 404, 419, and 425 each coordinate Zn(2+). A BRCT domain is found at 594–677; that stretch reads SHLSLLHGKT…QYISPNTNEN (84 aa).

Belongs to the NAD-dependent DNA ligase family. LigA subfamily. Mg(2+) is required as a cofactor. It depends on Mn(2+) as a cofactor.

It catalyses the reaction NAD(+) + (deoxyribonucleotide)n-3'-hydroxyl + 5'-phospho-(deoxyribonucleotide)m = (deoxyribonucleotide)n+m + AMP + beta-nicotinamide D-nucleotide.. In terms of biological role, DNA ligase that catalyzes the formation of phosphodiester linkages between 5'-phosphoryl and 3'-hydroxyl groups in double-stranded DNA using NAD as a coenzyme and as the energy source for the reaction. It is essential for DNA replication and repair of damaged DNA. In Ehrlichia canis (strain Jake), this protein is DNA ligase.